Consider the following 369-residue polypeptide: NAD(P)H-quinone oxidoreductase subunit 1, chloroplastic (369 aa).

Transmembrane regions (helical) follow at residues 25–45 (FGFIWIITPILTYTLGVTIGI), 104–124 (VMVVVPVFLSYLVIPLGHGII), 130–150 (IGVFFWIAVSSVAPLGLLTAG), 270–290 (LSATILYLGGWNSPIPFLFLP), and 306–326 (VISITIAIIITLAKAYSFLFI).

This sequence belongs to the complex I subunit 1 family. In terms of assembly, NDH is composed of at least 16 different subunits, 5 of which are encoded in the nucleus.

The protein localises to the plastid. It is found in the chloroplast thylakoid membrane. It catalyses the reaction a plastoquinone + NADH + (n+1) H(+)(in) = a plastoquinol + NAD(+) + n H(+)(out). It carries out the reaction a plastoquinone + NADPH + (n+1) H(+)(in) = a plastoquinol + NADP(+) + n H(+)(out). Its function is as follows. NDH shuttles electrons from NAD(P)H:plastoquinone, via FMN and iron-sulfur (Fe-S) centers, to quinones in the photosynthetic chain and possibly in a chloroplast respiratory chain. The immediate electron acceptor for the enzyme in this species is believed to be plastoquinone. Couples the redox reaction to proton translocation, and thus conserves the redox energy in a proton gradient. This Huperzia lucidula (Shining clubmoss) protein is NAD(P)H-quinone oxidoreductase subunit 1, chloroplastic.